The primary structure comprises 314 residues: tRNA pseudouridine synthase B (314 aa).

The active-site Nucleophile is the Asp-47.

It belongs to the pseudouridine synthase TruB family. Type 1 subfamily.

The catalysed reaction is uridine(55) in tRNA = pseudouridine(55) in tRNA. Responsible for synthesis of pseudouridine from uracil-55 in the psi GC loop of transfer RNAs. In Vibrio vulnificus (strain CMCP6), this protein is tRNA pseudouridine synthase B.